The primary structure comprises 340 residues: Proline-rich transmembrane protein 2 (340 aa).

Residues 1 to 261 form a disordered region; that stretch reads MAASSSEISE…AGPGVEGGEG (261 aa). The Cytoplasmic segment spans residues 1 to 268; the sequence is MAASSSEISE…GEGTQKPRDY (268 aa). Basic and acidic residues predominate over residues 9–18; it reads SEMKGVEESP. A Phosphoserine modification is found at S28. Residue T74 is modified to Phosphothreonine. Composition is skewed to pro residues over residues 131–155 and 197–207; these read PPEPAPEPAPQPDPRPDSQPTPKPA and APEPHSPPSKK. S238 bears the Phosphoserine mark. R240 carries the post-translational modification Omega-N-methylarginine. Phosphoserine is present on residues S248 and S249. The segment at residues 269 to 289 is an intramembrane region (helical); the sequence is IILAILSCFCPMWPVNIVAFA. The Cytoplasmic segment spans residues 290–317; sequence YAVMSRNSLQQGDVDGAQRLGRVAKLLS. A helical transmembrane segment spans residues 318–338; it reads IVALVGGVLIIIASCVINLGV. Residues 339–340 are Extracellular-facing; that stretch reads YK.

This sequence belongs to the CD225/Dispanin family. Component of the outer core of AMPAR complex. AMPAR complex consists of an inner core made of 4 pore-forming GluA/GRIA proteins (GRIA1, GRIA2, GRIA3 and GRIA4) and 4 major auxiliary subunits arranged in a twofold symmetry. One of the two pairs of distinct binding sites is occupied either by CNIH2, CNIH3 or CACNG2, CACNG3. The other harbors CACNG2, CACNG3, CACNG4, CACNG8 or GSG1L. This inner core of AMPAR complex is complemented by outer core constituents binding directly to the GluA/GRIA proteins at sites distinct from the interaction sites of the inner core constituents. Outer core constituents include at least PRRT1, PRRT2, CKAMP44/SHISA9, FRRS1L and NRN1. The proteins of the inner and outer core serve as a platform for other, more peripherally associated AMPAR constituents. Alone or in combination, these auxiliary subunits control the gating and pharmacology of the AMPAR complex and profoundly impact their biogenesis and protein processing. Interacts with intersectin 1/ITSN1. Interacts with SNARE complex components, including SNAP25, STX1A, SYT1 and SYT2; this interaction may inhibit SNARE complex formation.

The protein localises to the cell membrane. It localises to the presynaptic cell membrane. Its subcellular location is the synapse. The protein resides in the cell projection. It is found in the axon. The protein localises to the cytoplasmic vesicle. It localises to the secretory vesicle. Its subcellular location is the synaptic vesicle membrane. The protein resides in the postsynaptic density membrane. It is found in the dendritic spine. Its function is as follows. As a component of the outer core of AMPAR complex, may be involved in synaptic transmission in the central nervous system. In hippocampal neurons, in presynaptic terminals, plays an important role in the final steps of neurotransmitter release, possibly by regulating Ca(2+)-sensing. In the cerebellum, may inhibit SNARE complex formation and down-regulate short-term facilitation. This Homo sapiens (Human) protein is Proline-rich transmembrane protein 2 (PRRT2).